Consider the following 276-residue polypeptide: Large ribosomal subunit protein uL2 (276 aa).

Residues 224 to 276 (AMNPIDHPHGGGEGKTSGGRNPVTPWGVPTKGKKTRKRNKSSNKYIKRVSDKG) are disordered. Over residues 254–270 (KGKKTRKRNKSSNKYIK) the composition is skewed to basic residues.

This sequence belongs to the universal ribosomal protein uL2 family. As to quaternary structure, part of the 50S ribosomal subunit. Forms a bridge to the 30S subunit in the 70S ribosome.

One of the primary rRNA binding proteins. Required for association of the 30S and 50S subunits to form the 70S ribosome, for tRNA binding and peptide bond formation. It has been suggested to have peptidyltransferase activity; this is somewhat controversial. Makes several contacts with the 16S rRNA in the 70S ribosome. This is Large ribosomal subunit protein uL2 from Ehrlichia canis (strain Jake).